Consider the following 77-residue polypeptide: Acyl carrier protein (77 aa).

The Carrier domain occupies 1-76 (MAVFDDVRDV…DVVNYIEKLG (76 aa)). The residue at position 36 (serine 36) is an O-(pantetheine 4'-phosphoryl)serine.

This sequence belongs to the acyl carrier protein (ACP) family. Post-translationally, 4'-phosphopantetheine is transferred from CoA to a specific serine of apo-ACP by AcpS. This modification is essential for activity because fatty acids are bound in thioester linkage to the sulfhydryl of the prosthetic group.

It localises to the cytoplasm. It participates in lipid metabolism; fatty acid biosynthesis. Carrier of the growing fatty acid chain in fatty acid biosynthesis. The sequence is that of Acyl carrier protein from Campylobacter curvus (strain 525.92).